The following is a 296-amino-acid chain: 4-diphosphocytidyl-2-C-methyl-D-erythritol kinase (296 aa).

Lysine 18 is an active-site residue. 102-112 (PMGGGIGGGSS) is an ATP binding site. Aspartate 144 is an active-site residue.

The protein belongs to the GHMP kinase family. IspE subfamily.

It carries out the reaction 4-CDP-2-C-methyl-D-erythritol + ATP = 4-CDP-2-C-methyl-D-erythritol 2-phosphate + ADP + H(+). Its pathway is isoprenoid biosynthesis; isopentenyl diphosphate biosynthesis via DXP pathway; isopentenyl diphosphate from 1-deoxy-D-xylulose 5-phosphate: step 3/6. Its function is as follows. Catalyzes the phosphorylation of the position 2 hydroxy group of 4-diphosphocytidyl-2C-methyl-D-erythritol. This chain is 4-diphosphocytidyl-2-C-methyl-D-erythritol kinase, found in Vibrio atlanticus (strain LGP32) (Vibrio splendidus (strain Mel32)).